A 280-amino-acid chain; its full sequence is 4-diphosphocytidyl-2-C-methyl-D-erythritol kinase (280 aa).

Lys-8 is an active-site residue. 91 to 101 (PVAAGLAGGSS) is an ATP binding site. Asp-133 is an active-site residue.

This sequence belongs to the GHMP kinase family. IspE subfamily.

The enzyme catalyses 4-CDP-2-C-methyl-D-erythritol + ATP = 4-CDP-2-C-methyl-D-erythritol 2-phosphate + ADP + H(+). The protein operates within isoprenoid biosynthesis; isopentenyl diphosphate biosynthesis via DXP pathway; isopentenyl diphosphate from 1-deoxy-D-xylulose 5-phosphate: step 3/6. In terms of biological role, catalyzes the phosphorylation of the position 2 hydroxy group of 4-diphosphocytidyl-2C-methyl-D-erythritol. The protein is 4-diphosphocytidyl-2-C-methyl-D-erythritol kinase of Clostridium kluyveri (strain NBRC 12016).